We begin with the raw amino-acid sequence, 2193 residues long: Genome polyprotein (2193 aa).

The segment at 1–22 (MGSQVSTQRSGSHENSNSATEG) is disordered. The N-myristoyl glycine; by host moiety is linked to residue Gly-2. Topologically, residues 2 to 1503 (GSQVSTQRSG…HLNRAVLVMQ (1502 aa)) are cytoplasmic. 2 amphipathic alpha-helix regions span residues 566 to 588 (GDRV…LTPA) and 568 to 588 (RVAD…LTPA). Residues His-883 and Asp-901 each act as for protease 2A activity in the active site. Cys-918 and Cys-920 together coordinate Zn(2+). The active-site For protease 2A activity is Cys-972. 2 residues coordinate Zn(2+): Cys-978 and His-980. Residues 1112-1184 (SASWLKKFND…EQSAASQEDL (73 aa)) form a membrane-binding region. The oligomerization stretch occupies residues 1112–1250 (SASWLKKFND…SPGTGKSLAT (139 aa)). The RNA-binding stretch occupies residues 1133–1137 (FNKIS). Residues 1216-1374 (EKRMNNYMQF…YKTDLGRLDA (159 aa)) enclose the SF3 helicase domain. 1240–1247 (GSPGTGKS) serves as a coordination point for ATP. Positions 1381, 1392, and 1397 each coordinate Zn(2+). A C4-type; degenerate zinc finger spans residues 1381–1397 (CTENNTANFKRCSPLVC). The RNA-binding stretch occupies residues 1424–1431 (EYNNRSAI). Residues 1435–1440 (IEALFQ) form an oligomerization region. Residues 1504 to 1519 (SIATVVAVVSLVYVIY) lie within the membrane without spanning it. Topologically, residues 1520-2193 (KLFAGFQGAY…NLRRNWLELF (674 aa)) are cytoplasmic. Tyr-1529 carries the post-translational modification O-(5'-phospho-RNA)-tyrosine. A Peptidase C3 domain is found at 1549–1727 (GPSLDFALSL…FCAGLKRSYF (179 aa)). Active-site for protease 3C activity residues include His-1588, Glu-1619, and Cys-1695. Residues 1958 to 2073 (GSLFAFDYSG…ASYPFPIDCL (116 aa)) form the RdRp catalytic domain. Positions 1964 and 2060 each coordinate Mg(2+).

It belongs to the picornaviruses polyprotein family. Interacts with capsid protein VP1 and capsid protein VP3 to form heterotrimeric protomers. As to quaternary structure, interacts with capsid protein VP0, and capsid protein VP3 to form heterotrimeric protomers. Five protomers subsequently associate to form pentamers which serve as building blocks for the capsid. Interacts with capsid protein VP2, capsid protein VP3 and capsid protein VP4 following cleavage of capsid protein VP0. Interacts with host SCARB2. Interacts with host ARF6; this interaction mediates viral endocytosis. In terms of assembly, interacts with capsid protein VP1 and capsid protein VP3 in the mature capsid. Interacts with host SCARB2. Interacts with capsid protein VP0 and capsid protein VP1 to form heterotrimeric protomers. Five protomers subsequently associate to form pentamers which serve as building blocks for the capsid. Interacts with capsid protein VP4 in the mature capsid. Interacts with protein 2C; this interaction may be important for virion morphogenesis. As to quaternary structure, interacts with capsid protein VP1 and capsid protein VP3. In terms of assembly, homodimer. Interacts with host SPOP; this interaction promotes protease 2A ubiquitination and subsequent degradation. Interacts with host BAX; this interaction activates the mitochondrial apoptotic pathway. Interacts with host ILF2. As to quaternary structure, homohexamer; forms a hexameric ring structure with 6-fold symmetry characteristic of AAA+ ATPases. Interacts (via N-terminus) with host RTN3 (via reticulon domain); this interaction is important for viral replication. Interacts with capsid protein VP3; this interaction may be important for virion morphogenesis. In terms of assembly, interacts with protein 3CD. Homodimer. Interacts with host GBF1. Interacts (via GOLD domain) with host ACBD3 (via GOLD domain); this interaction allows the formation of a viral protein 3A/ACBD3 heterotetramer with a 2:2 stoichiometry, which will stimulate the recruitment of host PI4KB in order to synthesize PI4P at the viral RNA replication sites. As to quaternary structure, interacts with RNA-directed RNA polymerase. In terms of assembly, interacts with host IFIH1/MDA5; this interaction inhibits host IFIH1. Interacts with host RIGI. Interacts with protein 3AB and with RNA-directed RNA polymerase. Interacts with host PPP1R15A. As to quaternary structure, interacts with Viral protein genome-linked and with protein 3CD. Interacts with host NLRP3. Mg(2+) serves as cofactor. Specific enzymatic cleavages in vivo by the viral proteases yield processing intermediates and the mature proteins. In terms of processing, myristoylation is required for the formation of pentamers during virus assembly. Further assembly of 12 pentamers and a molecule of genomic RNA generates the provirion. Post-translationally, during virion maturation, immature virions are rendered infectious following cleavage of VP0 into VP4 and VP2. This maturation seems to be an autocatalytic event triggered by the presence of RNA in the capsid and it is followed by a conformational change infectious virion. Myristoylation is required during RNA encapsidation and formation of the mature virus particle. In terms of processing, VPg is uridylylated by the polymerase into VPg-pUpU. This acts as a nucleotide-peptide primer for the genomic RNA replication.

It localises to the virion. The protein resides in the host cytoplasm. Its subcellular location is the host cytoplasmic vesicle membrane. It is found in the host nucleus. It catalyses the reaction a ribonucleoside 5'-triphosphate + H2O = a ribonucleoside 5'-diphosphate + phosphate + H(+). It carries out the reaction Selective cleavage of Tyr-|-Gly bond in the picornavirus polyprotein.. The catalysed reaction is RNA(n) + a ribonucleoside 5'-triphosphate = RNA(n+1) + diphosphate. The enzyme catalyses Selective cleavage of Gln-|-Gly bond in the poliovirus polyprotein. In other picornavirus reactions Glu may be substituted for Gln, and Ser or Thr for Gly.. Replication or transcription is subject to high level of random mutations by the nucleotide analog ribavirin. Functionally, forms an icosahedral capsid of pseudo T=3 symmetry with capsid proteins VP2 and VP3. The capsid is 300 Angstroms in diameter, composed of 60 copies of each capsid protein and enclosing the viral positive strand RNA genome. Capsid protein VP1 mainly forms the vertices of the capsid. Capsid protein VP1, together with VP2, interacts with host cell receptor SCARB2 to provide virion attachment to target host cells. This attachment induces virion internalization predominantly through clathrin-dependent endocytosis. After binding to its receptor, the capsid undergoes conformational changes. Capsid protein VP1 N-terminus (that contains an amphipathic alpha-helix) and capsid protein VP4 are externalized. Together, they shape a pore in the host membrane through which viral genome is translocated to host cell cytoplasm. Forms an icosahedral capsid of pseudo T=3 symmetry with capsid proteins VP2 and VP3. The capsid is 300 Angstroms in diameter, composed of 60 copies of each capsid protein and enclosing the viral positive strand RNA genome. Capsid protein VP2, together with VP1, interacts with host cell receptor SCARB2 to provide virion attachment to target host cells. In terms of biological role, forms an icosahedral capsid of pseudo T=3 symmetry with capsid proteins VP2 and VP3. The capsid is 300 Angstroms in diameter, composed of 60 copies of each capsid protein and enclosing the viral positive strand RNA genome. Its function is as follows. Lies on the inner surface of the capsid shell. After binding to the host receptor, the capsid undergoes conformational changes. Capsid protein VP4 is released, Capsid protein VP1 N-terminus is externalized, and together, they shape a pore in the host membrane through which the viral genome is translocated into the host cell cytoplasm. Functionally, component of immature procapsids, which is cleaved into capsid proteins VP4 and VP2 after maturation. Allows the capsid to remain inactive before the maturation step. Cysteine protease that cleaves viral polyprotein and specific host proteins. It is responsible for the autocatalytic cleavage between the P1 and P2 regions, which is the first cleavage occurring in the polyprotein. Also cleaves the host translation initiation factor EIF4G1, in order to shut down the capped cellular mRNA translation. Inhibits the host nucleus-cytoplasm protein and RNA trafficking by cleaving host members of the nuclear pores. Counteracts stress granule formation probably by antagonizing its assembly or promoting its dissassembly. Cleaves and inhibits host IFIH1/MDA5, thereby inhibiting the type-I IFN production and the establishment of the antiviral state. Cleaves and inhibits host MAVS, thereby inhibiting the type-I IFN production and the establishment of the antiviral state. In terms of biological role, plays an essential role in the virus replication cycle by acting as a viroporin. Creates a pore in the host endoplasmic reticulum and as a consequence releases Ca2+ in the cytoplasm of infected cell. In turn, high levels of cytoplasmic calcium may trigger membrane trafficking and transport of viral ER-associated proteins to viroplasms, sites of viral genome replication. Also activates the mitochondrial apoptotic pathway by activating host BAX. Its function is as follows. Induces and associates with structural rearrangements of intracellular membranes. Displays RNA-binding, nucleotide binding and NTPase activities. May play a role in virion morphogenesis and viral RNA encapsidation by interacting with the capsid protein VP3. Functionally, localizes the viral replication complex to the surface of membranous vesicles. Together with protein 3CD binds the Cis-Active RNA Element (CRE) which is involved in RNA synthesis initiation. Acts as a cofactor to stimulate the activity of 3D polymerase, maybe through a nucleid acid chaperone activity. Localizes the viral replication complex to the surface of membranous vesicles. It inhibits host cell endoplasmic reticulum-to-Golgi apparatus transport and causes the disassembly of the Golgi complex, possibly through GBF1 interaction. This would result in depletion of MHC, trail receptors and IFN receptors at the host cell surface. Plays an essential role in viral RNA replication by recruiting ACBD3 and PI4KB at the viral replication sites, thereby allowing the formation of the rearranged membranous structures where viral replication takes place. In terms of biological role, acts as a primer for viral RNA replication and remains covalently bound to viral genomic RNA. VPg is uridylylated prior to priming replication into VPg-pUpU. The oriI viral genomic sequence may act as a template for this. The VPg-pUpU is then used as primer on the genomic RNA poly(A) by the RNA-dependent RNA polymerase to replicate the viral genome. During genome replication, the VPg-RNA linkage is removed by the host TDP2, thereby accelerating replication. During the late stage of the replication cycle, host TDP2 is excluded from sites of viral RNA synthesis and encapsidation, allowing for the generation of progeny virions. Its function is as follows. Involved in the viral replication complex and viral polypeptide maturation. It exhibits protease activity with a specificity and catalytic efficiency that is different from protease 3C. Protein 3CD lacks polymerase activity. Protein 3CD binds to the 5'UTR of the viral genome. Regulates host protein expression by interacting with host PPP1R15A to support viral replication. Functionally, major viral protease that mediates proteolytic processing of the polyprotein. Cleaves host EIF5B, contributing to host translation shutoff. Also cleaves host PABPC1, contributing to host translation shutoff. Disassembles host cytoplasmic stress granules by cleaving host G3BP1, although this effect is less prononced than the inhibition induced by protease 2A. Cleaves host RIGI and thus contributes to the inhibition of type I interferon production. Cleaves host IRF7 and thus contributes to the inhibition of type I interferon production. Cleaves host HNRNPA1 thereby increasing the translation of apoptosis protease activating factor APAF1, leading to apoptosis of the host cell. Cleaves host NLRP1, triggers host N-glycine-mediated degradation of the autoinhibitory NLRP1 N-terminal fragment. Cleaves and inactivates host GSDMD, preventing GSDMD-mediated pyroptosis. Also promotes apoptosis in infected cell through cleaving of host PINX1, a telomere binding protein in order to facilitate viral release. Impairs host PML-NBs production via PML cleavage and counter its antiviral activities. Replicates the viral genomic RNA on the surface of intracellular membranes. May form linear arrays of subunits that propagate along a strong head-to-tail interaction called interface-I. Covalently attaches UMP to a tyrosine of VPg, which is used to prime RNA synthesis. The positive stranded RNA genome is first replicated at virus induced membranous vesicles, creating a dsRNA genomic replication form. This dsRNA is then used as template to synthesize positive stranded RNA genomes. ss(+)RNA genomes are either translated, replicated or encapsidated. Facilitates the assembly of NLRP3 inflammasome complex and stimulates the cleavage of host pro-CASP1 and the secretion of IL-1beta. This is Genome polyprotein from Human enterovirus 71 (strain USA/BrCr/1970) (EV71).